A 142-amino-acid chain; its full sequence is Hemoglobin subunit alpha (142 aa).

Residues 2–142 (VLSAADKTNV…VSTVLTSKYR (141 aa)) form the Globin domain. Ser-4 carries the post-translational modification Phosphoserine. N6-succinyllysine is present on Lys-8. Position 9 is a phosphothreonine (Thr-9). Residue Lys-12 is modified to N6-succinyllysine. Lys-17 carries the post-translational modification N6-acetyllysine; alternate. Residue Lys-17 is modified to N6-succinyllysine; alternate. N6-succinyllysine is present on Lys-41. Ser-50 is modified (phosphoserine). His-59 lines the O2 pocket. A heme b-binding site is contributed by His-88. Ser-103 is subject to Phosphoserine. The residue at position 109 (Thr-109) is a Phosphothreonine. A Phosphoserine modification is found at Ser-125. Thr-135 and Thr-138 each carry phosphothreonine. Ser-139 carries the phosphoserine modification.

It belongs to the globin family. As to quaternary structure, heterotetramer of two alpha chains and two beta chains. As to expression, red blood cells.

Involved in oxygen transport from the lung to the various peripheral tissues. Functionally, hemopressin acts as an antagonist peptide of the cannabinoid receptor CNR1. Hemopressin-binding efficiently blocks cannabinoid receptor CNR1 and subsequent signaling. The protein is Hemoglobin subunit alpha (HBA) of Equus zebra (Mountain zebra).